Here is a 397-residue protein sequence, read N- to C-terminus: Lysophospholipid transporter LplT (397 aa).

Topologically, residues 1 to 17 (MSESVHTNTSLWSKGMK) are periplasmic. Residues 18-38 (AVIVAQFLSAFGDNALLFATL) traverse the membrane as a helical segment. The Cytoplasmic segment spans residues 39–52 (ALLKAQFYPEWSQP). Residues 53–73 (ILQMVFVGAYILFAPFVGQVA) form a helical membrane-spanning segment. Residues 74–90 (DSFAKGRVMMFANGLKL) are Periplasmic-facing. Residues 91 to 111 (LGAASICFGINPFLGYTLVGV) form a helical membrane-spanning segment. The Cytoplasmic portion of the chain corresponds to 112 to 144 (GAAAYSPAKYGILGELTTGSKLVKANGLMEAST). Residues 145 to 165 (IAAILLGSVAGGVLADWHVLV) form a helical membrane-spanning segment. A topological domain (periplasmic) is located at residue A166. Residues 167–187 (LAACALAYGGAVVANIYIPKL) traverse the membrane as a helical segment. Residues 188-226 (AAARPGQSWNLISMTRSFLNACTSLWRNGETRFSLVGTS) lie on the Cytoplasmic side of the membrane. A helical membrane pass occupies residues 227–247 (LFWGAGVTLRFLLVLWVPVAL). Topologically, residues 248–256 (GITDNATPT) are periplasmic. Residues 257–277 (YLNAMVAIGIVVGAGAAAKLV) traverse the membrane as a helical segment. At 278–280 (TLE) the chain is on the cytoplasmic side. The chain crosses the membrane as a helical span at residues 281-301 (TVSRCMPAGILIGVVVLIFSL). Residues 302-304 (QHE) lie on the Periplasmic side of the membrane. Residues 305-325 (LLPAYALLMLIGVLGGFFVVP) form a helical membrane-spanning segment. Residues 326-343 (LNALLQERGKKSVGAGNA) lie on the Cytoplasmic side of the membrane. A helical transmembrane segment spans residues 344–364 (IAVQNLGENSAMLLMLGIYSL). Over 365–366 (AV) the chain is Periplasmic. A helical membrane pass occupies residues 367-387 (MVGIPVVPIGIGFGALFALAI). Topologically, residues 388–397 (TALWIWQRRH) are cytoplasmic.

This sequence belongs to the major facilitator superfamily. LplT (TC 2.A.1.42) family.

The protein resides in the cell inner membrane. In terms of biological role, catalyzes the facilitated diffusion of 2-acyl-glycero-3-phosphoethanolamine (2-acyl-GPE) into the cell. In Escherichia coli O7:K1 (strain IAI39 / ExPEC), this protein is Lysophospholipid transporter LplT.